The chain runs to 360 residues: Glutamate 5-kinase (360 aa).

K11 contacts ATP. 3 residues coordinate substrate: S51, D138, and N150. The region spanning K278–Y356 is the PUA domain.

It belongs to the glutamate 5-kinase family.

It localises to the cytoplasm. The enzyme catalyses L-glutamate + ATP = L-glutamyl 5-phosphate + ADP. Its pathway is amino-acid biosynthesis; L-proline biosynthesis; L-glutamate 5-semialdehyde from L-glutamate: step 1/2. Functionally, catalyzes the transfer of a phosphate group to glutamate to form L-glutamate 5-phosphate. The sequence is that of Glutamate 5-kinase from Bacteroides thetaiotaomicron (strain ATCC 29148 / DSM 2079 / JCM 5827 / CCUG 10774 / NCTC 10582 / VPI-5482 / E50).